A 374-amino-acid chain; its full sequence is MILATTSSTCATLGEMVTVLSIDGGGIKGIIPAIILEFLEGQLQEVDNNADARLADYFDVIGGTSTGGLLTAMITTPNENNRPFAAAKDIVPFYFEHGPHIFNYSGSILGPMYDGKYLLQVLQEKLGETRVHQALTEVAISSFDIKTNKPVIFTKSNLAESPQLDAKMYDICYSTAAAPIYFPPHYFVTHTSNGDRYEFNLVDGGVATVGDPALLSLSVATKLAQVDPKFASIKSLDYKQMLLLSLGTGTNSEFDKTYTAQETAKWGPLRWMLAIQQMTNAASSYMTDYYISTVFQARHSQNNYLRVQENALTGTTTEMDDASEANMELLVQVGETLLKKPVSKDSPETYEEALKRFAKLLSDRKKLRANKASY.

Positions 1–11 (MILATTSSTCA) are cleaved as a signal peptide. The region spanning 20–217 (LSIDGGGIKG…TVGDPALLSL (198 aa)) is the PNPLA domain. The GXGXXG signature appears at 24–29 (GGGIKG). Residues 63 to 67 (GTSTG) carry the GXSXG motif. Residue Ser65 is the Nucleophile of the active site. A glycan (N-linked (GlcNAc...) asparagine) is linked at Asn103. Catalysis depends on Asp203, which acts as the Proton acceptor. The short motif at 203–205 (DGG) is the DGA/G element. A coiled-coil region spans residues 309–372 (ENALTGTTTE…DRKKLRANKA (64 aa)).

This sequence belongs to the patatin family.

Its subcellular location is the vacuole. Functionally, probable lipolytic acyl hydrolase (LAH), an activity which is thought to be involved in the response of tubers to pathogens. This is Patatin-2-Kuras 4 (pat2-k4) from Solanum tuberosum (Potato).